Reading from the N-terminus, the 361-residue chain is D-alanine--D-alanine ligase (361 aa).

An ATP-grasp domain is found at 139–336; that stretch reads KLLLKEKEIS…FSQIIDNMIN (198 aa). Residue 167 to 222 coordinates ATP; it reads EKNLGYPMIVKPARLGSSIGVSKVVDRKNFEEAVKNVLLFDNKVLVEKWINAREIN. Mg(2+)-binding residues include Asp296, Glu307, and Asn309.

This sequence belongs to the D-alanine--D-alanine ligase family. Mg(2+) is required as a cofactor. It depends on Mn(2+) as a cofactor.

Its subcellular location is the cytoplasm. The enzyme catalyses 2 D-alanine + ATP = D-alanyl-D-alanine + ADP + phosphate + H(+). It functions in the pathway cell wall biogenesis; peptidoglycan biosynthesis. In terms of biological role, cell wall formation. The sequence is that of D-alanine--D-alanine ligase from Thermosipho melanesiensis (strain DSM 12029 / CIP 104789 / BI429).